Reading from the N-terminus, the 343-residue chain is Tetraacyldisaccharide 4'-kinase (343 aa).

53–60 contacts ATP; it reads TCGGAGKT.

This sequence belongs to the LpxK family.

It catalyses the reaction a lipid A disaccharide + ATP = a lipid IVA + ADP + H(+). It functions in the pathway glycolipid biosynthesis; lipid IV(A) biosynthesis; lipid IV(A) from (3R)-3-hydroxytetradecanoyl-[acyl-carrier-protein] and UDP-N-acetyl-alpha-D-glucosamine: step 6/6. Its function is as follows. Transfers the gamma-phosphate of ATP to the 4'-position of a tetraacyldisaccharide 1-phosphate intermediate (termed DS-1-P) to form tetraacyldisaccharide 1,4'-bis-phosphate (lipid IVA). This is Tetraacyldisaccharide 4'-kinase from Bartonella quintana (strain Toulouse) (Rochalimaea quintana).